A 520-amino-acid polypeptide reads, in one-letter code: GMP synthase [glutamine-hydrolyzing] (520 aa).

The region spanning 9-202 is the Glutamine amidotransferase type-1 domain; it reads SVLIVDFGSQ…IHNIAGIKGD (194 aa). The active-site Nucleophile is the cysteine 86. Residues histidine 176 and glutamate 178 contribute to the active site. The GMPS ATP-PPase domain occupies 203–395; sequence WSMSAYRQKA…LGLPDSFIGR (193 aa). ATP is bound at residue 230–236; it reads SGGVDSS.

Homodimer.

The enzyme catalyses XMP + L-glutamine + ATP + H2O = GMP + L-glutamate + AMP + diphosphate + 2 H(+). The protein operates within purine metabolism; GMP biosynthesis; GMP from XMP (L-Gln route): step 1/1. Catalyzes the synthesis of GMP from XMP. The chain is GMP synthase [glutamine-hydrolyzing] from Rhizobium etli (strain CIAT 652).